A 1480-amino-acid polypeptide reads, in one-letter code: MQRSPLEKASVVSKLFFSWTRPILRKGYRQRLELSDIYQIPSVDSADNLSEKLEREWDRELASKKNPKLINALRRCFFWRFMFYGIFLYLGEVTKAVQPLLLGRIIASYDPDNKEERSIAIYLGIGLCLLFIVRTLLLHPAIFGLHHIGMQMRIAMFSLIYKKTLKLSSRVLDKISIGQLVSLLSNNLNKFDEGLALAHFVWIAPLQVALLMGLIWELLQASAFCGLGFLIVLALFQAGLGRMMMKYRDQRAGKISERLVITSEMIENIQSVKAYCWEEAMEKMIENLRQTELKLTRKAAYVRYFNSSAFFFSGFFVVFLSVLPYALIKGIILRKIFTTISFCIVLRMAVTRQFPWAVQTWYDSLGAINKIQDFLQKQEYKTLEYNLTTTEVVMENVTAFWEEGFGELFEKAKQNNNNRKTSNGDDSLFFSNFSLLGTPVLKDINFKIERGQLLAVAGSTGAGKTSLLMVIMGELEPSEGKIKHSGRISFCSQFSWIMPGTIKENIIFGVSYDEYRYRSVIKACQLEEDISKFAEKDNIVLGEGGITLSGGQRARISLARAVYKDADLYLLDSPFGYLDVLTEKEIFESCVCKLMANKTRILVTSKMEHLKKADKILILHEGSSYFYGTFSELQNLQPDFSSKLMGCDSFDQFSAERRNSILTETLHRFSLEGDAPVSWTETKKQSFKQTGEFGEKRKNSILNPINSIRKFSIVQKTPLQMNGIEEDSDEPLERRLSLVPDSEQGEAILPRISVISTGPTLQARRRQSVLNLMTHSVNQGQNIHRKTTASTRKVSLAPQANLTELDIYSRRLSQETGLEISEEINEEDLKECFFDDMESIPAVTTWNTYLRYITVHKSLIFVLIWCLVIFLAEVAASLVVLWLLGNTPLQDKGNSTHSRNNSYAVIITSTSSYYVFYIYVGVADTLLAMGFFRGLPLVHTLITVSKILHHKMLHSVLQAPMSTLNTLKAGGILNRFSKDIAILDDLLPLTIFDFIQLLLIVIGAIAVVAVLQPYIFVATVPVIVAFIMLRAYFLQTSQQLKQLESEGRSPIFTHLVTSLKGLWTLRAFGRQPYFETLFHKALNLHTANWFLYLSTLRWFQMRIEMIFVIFFIAVTFISILTTGEGEGRVGIILTLAMNIMSTLQWAVNSSIDVDSLMRSVSRVFKFIDMPTEGKPTKSTKPYKNGQLSKVMIIENSHVKKDDIWPSGGQMTVKDLTAKYTEGGNAILENISFSISPGQRVGLLGRTGSGKSTLLSAFLRLLNTEGEIQIDGVSWDSITLQQWRKAFGVIPQKVFIFSGTFRKNLDPYEQWSDQEIWKVADEVGLRSVIEQFPGKLDFVLVDGGCVLSHGHKQLMCLARSVLSKAKILLLDEPSAHLDPVTYQIIRRTLKQAFADCTVILCEHRIEAMLECQQFLVIEENKVRQYDSIQKLLNERSLFRQAISPSDRVKLFPHRNSSKCKSKPQIAALKEETEEEVQDTRL.

Residues 1 to 77 (MQRSPLEKAS…KLINALRRCF (77 aa)) lie on the Cytoplasmic side of the membrane. The helical transmembrane segment at 78 to 98 (FWRFMFYGIFLYLGEVTKAVQ) threads the bilayer. An ABC transmembrane type-1 1 domain is found at 81–365 (FMFYGIFLYL…WAVQTWYDSL (285 aa)). Residues 99–122 (PLLLGRIIASYDPDNKEERSIAIY) are Extracellular-facing. Residues 123 to 146 (LGIGLCLLFIVRTLLLHPAIFGLH) form a helical membrane-spanning segment. The Cytoplasmic segment spans residues 147–195 (HIGMQMRIAMFSLIYKKTLKLSSRVLDKISIGQLVSLLSNNLNKFDEGL). A helical membrane pass occupies residues 196 to 216 (ALAHFVWIAPLQVALLMGLIW). Over 217–222 (ELLQAS) the chain is Extracellular. The helical transmembrane segment at 223 to 243 (AFCGLGFLIVLALFQAGLGRM) threads the bilayer. The Cytoplasmic portion of the chain corresponds to 244 to 298 (MMKYRDQRAGKISERLVITSEMIENIQSVKAYCWEEAMEKMIENLRQTELKLTRK). The helical transmembrane segment at 299–319 (AAYVRYFNSSAFFFSGFFVVF) threads the bilayer. The Extracellular segment spans residues 320–339 (LSVLPYALIKGIILRKIFTT). A helical transmembrane segment spans residues 340–358 (ISFCIVLRMAVTRQFPWAV). The Cytoplasmic segment spans residues 359–858 (QTWYDSLGAI…YLRYITVHKS (500 aa)). Residues W401, S434, 458–465 (GSTGAGKT), and Q493 each bind ATP. In terms of domain architecture, ABC transporter 1 spans 423–646 (NGDDSLFFSN…QPDFSSKLMG (224 aa)). A lipid anchor (S-palmitoyl cysteine) is attached at C524. S549 bears the Phosphoserine mark. The interval 654-831 (SAERRNSILT…EEINEEDLKE (178 aa)) is disordered R region. Phosphoserine; by PKA occurs at positions 660 and 670. S686 is subject to Phosphoserine; by PKC. K688 is covalently cross-linked (Glycyl lysine isopeptide (Lys-Gly) (interchain with G-Cter in ubiquitin)). Residues S700 and S712 each carry the phosphoserine; by PKA modification. At T717 the chain carries Phosphothreonine. A phosphoserine; by PKA mark is found at S737, S753, and S768. S790 is subject to Phosphoserine; by PKC. 2 positions are modified to phosphoserine; by PKA: S795 and S813. The chain crosses the membrane as a helical span at residues 859–879 (LIFVLIWCLVIFLAEVAASLV). An ABC transmembrane type-1 2 domain is found at 859–1155 (LIFVLIWCLV…AVNSSIDVDS (297 aa)). Residues 880-918 (VLWLLGNTPLQDKGNSTHSRNNSYAVIITSTSSYYVFYI) lie on the Extracellular side of the membrane. N-linked (GlcNAc...) asparagine glycans are attached at residues N894 and N900. A discontinuously helical transmembrane segment spans residues 919-939 (YVGVADTLLAMGFFRGLPLVH). Residues 940-990 (TLITVSKILHHKMLHSVLQAPMSTLNTLKAGGILNRFSKDIAILDDLLPLT) are Cytoplasmic-facing. Residues 991 to 1011 (IFDFIQLLLIVIGAIAVVAVL) traverse the membrane as a helical segment. Over 1012 to 1013 (QP) the chain is Extracellular. A helical membrane pass occupies residues 1014–1034 (YIFVATVPVIVAFIMLRAYFL). The Cytoplasmic segment spans residues 1035 to 1095 (QTSQQLKQLE…TANWFLYLST (61 aa)). The helical transmembrane segment at 1096-1116 (LRWFQMRIEMIFVIFFIAVTF) threads the bilayer. At 1117–1130 (ISILTTGEGEGRVG) the chain is on the extracellular side. The chain crosses the membrane as a helical span at residues 1131–1151 (IILTLAMNIMSTLQWAVNSSI). At 1152–1480 (DVDSLMRSVS…TEEEVQDTRL (329 aa)) the chain is on the cytoplasmic side. Residues 1210–1443 (MTVKDLTAKY…RSLFRQAISP (234 aa)) enclose the ABC transporter 2 domain. Residues Y1219 and 1244–1251 (GRTGSGKS) each bind ATP. The tract at residues 1386–1480 (RTLKQAFADC…TEEEVQDTRL (95 aa)) is interaction with GORASP2. Residue C1395 is the site of S-palmitoyl cysteine attachment. S1444 and S1456 each carry phosphoserine. A disordered region spans residues 1452-1480 (HRNSSKCKSKPQIAALKEETEEEVQDTRL). Positions 1470-1480 (ETEEEVQDTRL) are enriched in acidic residues. The PDZ-binding signature appears at 1478–1480 (TRL).

The protein belongs to the ABC transporter superfamily. ABCC family. CFTR transporter (TC 3.A.1.202) subfamily. Monomer; does not require oligomerization for channel activity. May form oligomers in the membrane. Interacts with SLC26A3, SLC26A6 and SHANK2. Interacts with NHERF1 and MYO6. Interacts (via C-terminus) with GOPC (via PDZ domain); this promotes CFTR internalization and thereby decreases channel activity. Interacts with SLC4A7 through NHERF1. Found in a complex with MYO5B and RAB11A. Interacts with ANO1. Interacts with SLC26A8. Interacts with AHCYL1; the interaction increases CFTR activity. Interacts with CSE1L. The core-glycosylated form interacts with GORASP2 (via PDZ GRASP-type 1 domain) in respone to ER stress. Interacts with MARCHF2; the interaction leads to CFTR ubiqtuitination and degradation. Interacts with ADGRG2. In terms of processing, N-glycosylated. Phosphorylated; cAMP treatment promotes phosphorylation and activates the channel. Dephosphorylation decreases the ATPase activity (in vitro). Phosphorylation at PKA sites activates the channel. Phosphorylation at PKC sites enhances the response to phosphorylation by PKA. Phosphorylated by AMPK; this inhibits channel activity. Post-translationally, ubiquitinated, leading to its degradation in the lysosome. Deubiquitination by USP10 in early endosomes enhances its endocytic recycling to the cell membrane. Ubiquitinated by RNF185 during ER stress. Ubiquitinated by MARCHF2. Expressed in the respiratory airway, including bronchial epithelium, and in the female reproductive tract, including oviduct (at protein level). Detected in pancreatic intercalated ducts in the exocrine tissue, on epithelial cells in intralobular striated ducts in sublingual salivary glands, on apical membranes of crypt cells throughout the small and large intestine, and on the reabsorptive duct in eccrine sweat glands. Detected on the equatorial segment of the sperm head (at protein level). Detected in nasal and bronchial superficial epithelium. Expressed by the central cells on the sebaceous glands, dermal adipocytes and, at lower levels, by epithelial cells.

It localises to the apical cell membrane. It is found in the early endosome membrane. Its subcellular location is the cell membrane. The protein localises to the recycling endosome membrane. The protein resides in the endoplasmic reticulum membrane. It localises to the nucleus. The catalysed reaction is ATP + H2O + closed Cl(-) channel = ADP + phosphate + open Cl(-) channel.. It catalyses the reaction chloride(in) = chloride(out). It carries out the reaction hydrogencarbonate(in) = hydrogencarbonate(out). The enzyme catalyses ATP + H2O = ADP + phosphate + H(+). Its function is as follows. Epithelial ion channel that plays an important role in the regulation of epithelial ion and water transport and fluid homeostasis. Mediates the transport of chloride ions across the cell membrane. Possesses an intrinsic ATPase activity and utilizes ATP to gate its channel; the passive flow of anions through the channel is gated by cycles of ATP binding and hydrolysis by the ATP-binding domains. The ion channel is also permeable to HCO(3)(-); selectivity depends on the extracellular chloride concentration. In vitro, mediates ATP-dependent glutathione flux. Exerts its function also by modulating the activity of other ion channels and transporters. Plays an important role in airway fluid homeostasis. Contributes to the regulation of the pH and the ion content of the airway surface fluid layer and thereby plays an important role in defense against pathogens. Modulates the activity of the epithelial sodium channel (ENaC) complex, in part by regulating the cell surface expression of the ENaC complex. Inhibits the activity of the ENaC channel containing subunits SCNN1A, SCNN1B and SCNN1G. Inhibits the activity of the ENaC channel containing subunits SCNN1D, SCNN1B and SCNN1G, but not of the ENaC channel containing subunits SCNN1A, SCNN1B and SCNN1G. May regulate bicarbonate secretion and salvage in epithelial cells by regulating the transporter SLC4A7. Can inhibit the chloride channel activity of ANO1. Plays a role in the chloride and bicarbonate homeostasis during sperm epididymal maturation and capacitation. This is Cystic fibrosis transmembrane conductance regulator from Homo sapiens (Human).